The sequence spans 167 residues: Peptide deformylase (167 aa).

C91 and H133 together coordinate Fe cation. Residue E134 is part of the active site. H137 is a Fe cation binding site.

Belongs to the polypeptide deformylase family. Fe(2+) serves as cofactor.

It carries out the reaction N-terminal N-formyl-L-methionyl-[peptide] + H2O = N-terminal L-methionyl-[peptide] + formate. Removes the formyl group from the N-terminal Met of newly synthesized proteins. Requires at least a dipeptide for an efficient rate of reaction. N-terminal L-methionine is a prerequisite for activity but the enzyme has broad specificity at other positions. This Neisseria gonorrhoeae (strain ATCC 700825 / FA 1090) protein is Peptide deformylase.